The chain runs to 504 residues: ATP synthase subunit alpha, chloroplastic (504 aa).

170 to 177 lines the ATP pocket; it reads GDRQTGKT.

The protein belongs to the ATPase alpha/beta chains family. As to quaternary structure, F-type ATPases have 2 components, CF(1) - the catalytic core - and CF(0) - the membrane proton channel. CF(1) has five subunits: alpha(3), beta(3), gamma(1), delta(1), epsilon(1). CF(0) has four main subunits: a, b, b' and c.

Its subcellular location is the plastid. It localises to the chloroplast thylakoid membrane. The catalysed reaction is ATP + H2O + 4 H(+)(in) = ADP + phosphate + 5 H(+)(out). Produces ATP from ADP in the presence of a proton gradient across the membrane. The alpha chain is a regulatory subunit. This Triticum aestivum (Wheat) protein is ATP synthase subunit alpha, chloroplastic.